Reading from the N-terminus, the 354-residue chain is MDFQGSIPTYIYDIDYSMSAPCQKVNVKQIAAQLLPPLYSLVFIFGFVGNMMVFLILISCKKLKSMTDIYLFNLAISDLLFLLTLPFWAHYAANEWVFGNIMCKLFTGIYHIGYFGGIFFIILLTIDRYLAIVHAVFAIKARTVNFGVITSVVTWVVAVFVSLPEIIFMRSQKEGSHYTCSPHFLHIQYRFWKHFQTLKMVILSLILPLLVMVICYSGILNTLFRCRNEKKRHRAVRLIFAIMIVYFLFWTPYNIVLLLTTFQEYFGLNNCSSSNRLDQAMQVTETLGMTHCCLNPVIYAFVGEKFRNYLSVFFRKHIVKRFCKHCSIFQQVNPDRVSSVYTRSTGEQEVSTGL.

Residues 1–32 (MDFQGSIPTYIYDIDYSMSAPCQKVNVKQIAA) lie on the Extracellular side of the membrane. A glycan (O-linked (GalNAc...) serine) is linked at serine 6. Sulfotyrosine is present on residues tyrosine 10 and tyrosine 16. 2 cysteine pairs are disulfide-bonded: cysteine 22–cysteine 271 and cysteine 103–cysteine 180. Residues 33 to 60 (QLLPPLYSLVFIFGFVGNMMVFLILISC) form a helical membrane-spanning segment. At 61–70 (KKLKSMTDIY) the chain is on the cytoplasmic side. Residues 71-91 (LFNLAISDLLFLLTLPFWAHY) traverse the membrane as a helical segment. At 92–104 (AANEWVFGNIMCK) the chain is on the extracellular side. Residues 105 to 126 (LFTGIYHIGYFGGIFFIILLTI) traverse the membrane as a helical segment. Over 127 to 143 (DRYLAIVHAVFAIKART) the chain is Cytoplasmic. Residues 144–168 (VNFGVITSVVTWVVAVFVSLPEIIF) form a helical membrane-spanning segment. Residues 169–200 (MRSQKEGSHYTCSPHFLHIQYRFWKHFQTLKM) lie on the Extracellular side of the membrane. Residues 201–220 (VILSLILPLLVMVICYSGIL) form a helical membrane-spanning segment. Over 221-237 (NTLFRCRNEKKRHRAVR) the chain is Cytoplasmic. The helical transmembrane segment at 238-262 (LIFAIMIVYFLFWTPYNIVLLLTTF) threads the bilayer. The Extracellular segment spans residues 263–279 (QEYFGLNNCSSSNRLDQ). A helical transmembrane segment spans residues 280-303 (AMQVTETLGMTHCCLNPVIYAFVG). Topologically, residues 304 to 354 (EKFRNYLSVFFRKHIVKRFCKHCSIFQQVNPDRVSSVYTRSTGEQEVSTGL) are cytoplasmic. 2 S-palmitoyl cysteine lipidation sites follow: cysteine 323 and cysteine 326. Phosphoserine; by BARK1 is present on residues serine 338, serine 339, serine 344, and serine 351.

It belongs to the G-protein coupled receptor 1 family. As to quaternary structure, interacts with PRAF2. Efficient ligand binding to CCL3/MIP-1alpha and CCL4/MIP-1beta requires sulfation, O-glycosylation and sialic acid modifications. Glycosylation on Ser-6 is required for efficient binding of CCL4. Interacts with GRK2. Interacts with ARRB1 and ARRB2. Interacts with CNIH4. Interacts with S100A4; this interaction stimulates T-lymphocyte chemotaxis. Sulfated on at least 2 of the N-terminal tyrosines. Sulfation is required for efficient binding of the chemokines, CCL3 and CCL4. Post-translationally, O-glycosylated, but not N-glycosylated. Ser-6 appears to be the major site. Also sialylated glycans present which contribute to chemokine binding. Ser-17 may also be glycosylated and, if so, with small moieties such as a T-antigen. In terms of processing, palmitoylation in the C-terminal is important for cell surface expression. Phosphorylation on serine residues in the C-terminal is stimulated by binding CC chemokines especially by APO-RANTES.

The protein resides in the cell membrane. Its function is as follows. Receptor for a number of inflammatory CC-chemokines including CCL3/MIP-1-alpha, CCL4/MIP-1-beta and RANTES and subsequently transduces a signal by increasing the intracellular calcium ion level. May play a role in the control of granulocytic lineage proliferation or differentiation. Participates in T-lymphocyte migration to the infection site by acting as a chemotactic receptor. This is C-C chemokine receptor type 5 (Ccr5) from Rattus norvegicus (Rat).